We begin with the raw amino-acid sequence, 147 residues long: Hemoglobin subunit beta-2 (147 aa).

The 145-residue stretch at 3–147 folds into the Globin domain; sequence HWTAEEKAAI…LVDGLSQGYN (145 aa). His64 and His93 together coordinate heme b.

It belongs to the globin family. In terms of assembly, heterotetramer of two alpha chains and two beta chains. In terms of tissue distribution, red blood cells.

Its function is as follows. Involved in oxygen transport from the lung to the various peripheral tissues. In Xenopus laevis (African clawed frog), this protein is Hemoglobin subunit beta-2 (hbb2).